The sequence spans 378 residues: Probable endopolygalacturonase E (378 aa).

Residues 1–19 (MVTSSSVIVLTLWAALVSA) form the signal peptide. The propeptide occupies 20 to 38 (SPVADPLVTPAPKLEDLEK). Cys43 and Cys61 are oxidised to a cystine. PbH1 repeat units follow at residues 103–125 (GPLV…YLNG), 174–204 (STYL…DIGD), and 205–226 (STYI…AVNS). The active-site Proton donor is the Asp219. Residues Cys221 and Cys237 are joined by a disulfide bond. The active site involves His241. PbH1 repeat units follow at residues 256–277 (VKNV…RIKT), 285–307 (VSEV…VVEQ), and 317–345 (TDGI…YIVC). N-linked (GlcNAc...) asparagine glycosylation is present at Asn258. 2 cysteine pairs are disulfide-bonded: Cys345–Cys350 and Cys369–Cys378.

This sequence belongs to the glycosyl hydrolase 28 family.

Its subcellular location is the secreted. The catalysed reaction is (1,4-alpha-D-galacturonosyl)n+m + H2O = (1,4-alpha-D-galacturonosyl)n + (1,4-alpha-D-galacturonosyl)m.. In terms of biological role, involved in maceration and soft-rotting of plant tissue. Hydrolyzes the 1,4-alpha glycosidic bonds of de-esterified pectate in the smooth region of the plant cell wall. The sequence is that of Probable endopolygalacturonase E (pgaE) from Aspergillus niger (strain ATCC MYA-4892 / CBS 513.88 / FGSC A1513).